The chain runs to 863 residues: Paramyosin (863 aa).

Positions 1 to 18 are nonhelical region; the sequence is MSESHVKISRTIIRGTSP. A coiled-coil region spans residues 19–836; that stretch reads STVRLESRVR…ERTITIKRTI (818 aa). The nonhelical region stretch occupies residues 837-863; sequence GGPGSRAVSVVREINSVSRGNRATSIM.

The protein belongs to the paramyosin family. As to quaternary structure, homodimer or monomer in secreted form.

Its subcellular location is the cytoplasm. The protein localises to the myofibril. It localises to the secreted. Functionally, paramyosin is a major structural component of many thick filaments isolated from invertebrate muscles. It is a prominent antigen in human cysticercosis, may have a role as a modulator of the host immune response. It is able to bind collagen and has complement inhibitor activity. This is Paramyosin (PMY) from Taenia solium (Pork tapeworm).